A 550-amino-acid polypeptide reads, in one-letter code: CCR4-NOT transcription complex subunit 6-like-A (550 aa).

Positions 1–148 (MPKEKYDPPD…LYQEPDGMRK (148 aa)) are required for interaction with cnot1, cnot3 and cnot7. LRR repeat units follow at residues 52–73 (HLTV…IAKL), 75–96 (NLVY…LGNV), 98–120 (SLRE…GRLF), and 121–143 (RLQT…YQEP). The interval 153-550 (MLDNLSVHPE…INGVHLPSRR (398 aa)) is nuclease domain. Glu235 contacts Mg(2+). Residues Glu235, Glu271, His355, and Pro360 each contribute to the substrate site. Asp405 is a binding site for Mg(2+). Asp405 functions as the Proton donor/acceptor in the catalytic mechanism. 3 residues coordinate substrate: Asn407, Asn474, and Phe479.

The protein belongs to the CCR4/nocturin family. As to quaternary structure, component of the CCR4-NOT complex. The cofactor is Mg(2+).

It is found in the cytoplasm. It localises to the nucleus. It carries out the reaction Exonucleolytic cleavage of poly(A) to 5'-AMP.. Its function is as follows. Poly(A) nuclease with 3'-5' RNase activity. Catalytic component of the CCR4-NOT complex which is one of the major cellular mRNA deadenylases and is linked to various cellular processes including bulk mRNA degradation, miRNA-mediated repression, translational repression during translational initiation and general transcription regulation. Additional complex functions may be a consequence of its influence on mRNA expression. This is CCR4-NOT transcription complex subunit 6-like-A (cnot6l-a) from Xenopus laevis (African clawed frog).